We begin with the raw amino-acid sequence, 206 residues long: uncharacterized protein (206 aa).

This is an uncharacterized protein from Methanocaldococcus jannaschii (strain ATCC 43067 / DSM 2661 / JAL-1 / JCM 10045 / NBRC 100440) (Methanococcus jannaschii).